We begin with the raw amino-acid sequence, 145 residues long: uncharacterized protein (145 aa).

The protein belongs to the methyltransferase superfamily.

Its function is as follows. Probable methyltransferase. This is an uncharacterized protein from Schizosaccharomyces pombe (strain 972 / ATCC 24843) (Fission yeast).